The sequence spans 188 residues: MKVILASASQRRQELLIRLCDNFDIIVSDFDEEKVVFENSIDEYVQNIALGKAMDIKEKIKEDAIIISADTIVTLDDKILGKPKDEEDAFNMIKLLQGRSHKVYSGVVVINTKKDLIIKNSVATEVVFSKMNDDEIRKYIKTKEPLDKAGAYGIQGIGGIFVEEIRGCYYNVVGLPLNKLKTMLEEAI.

Asp70 acts as the Proton acceptor in catalysis.

Belongs to the Maf family. YhdE subfamily. A divalent metal cation serves as cofactor.

It localises to the cytoplasm. The enzyme catalyses dTTP + H2O = dTMP + diphosphate + H(+). It catalyses the reaction UTP + H2O = UMP + diphosphate + H(+). Its function is as follows. Nucleoside triphosphate pyrophosphatase that hydrolyzes dTTP and UTP. May have a dual role in cell division arrest and in preventing the incorporation of modified nucleotides into cellular nucleic acids. This chain is dTTP/UTP pyrophosphatase, found in Clostridium botulinum (strain Eklund 17B / Type B).